We begin with the raw amino-acid sequence, 224 residues long: uncharacterized protein (224 aa).

Its subcellular location is the virion. This is an uncharacterized protein from Acanthamoeba polyphaga mimivirus (APMV).